Consider the following 190-residue polypeptide: Ribosome maturation factor RimM (190 aa).

Positions 114-190 (DDEYYWVDLI…CITVDWQPDY (77 aa)) constitute a PRC barrel domain.

The protein belongs to the RimM family. As to quaternary structure, binds ribosomal protein uS19.

The protein localises to the cytoplasm. In terms of biological role, an accessory protein needed during the final step in the assembly of 30S ribosomal subunit, possibly for assembly of the head region. Essential for efficient processing of 16S rRNA. May be needed both before and after RbfA during the maturation of 16S rRNA. It has affinity for free ribosomal 30S subunits but not for 70S ribosomes. This Acidovorax sp. (strain JS42) protein is Ribosome maturation factor RimM.